The chain runs to 509 residues: Serine/threonine protein kinase OSK4 (509 aa).

The Protein kinase domain maps to 17 to 269 (YNLGRTLGIG…IREIREHQWF (253 aa)). ATP contacts are provided by residues 23–31 (LGIGSFGKV) and Lys-46. Asp-140 acts as the Proton acceptor in catalysis. One can recognise a UBA domain in the interval 290-330 (MIDEDTLQDVVNLGYEKDHVCESLRNRLQNEATVAYYLLLD). The KA1 domain maps to 460 to 508 (NGRLPAVIKFEIQLYKSRDEKYLLDMQRVTGPQLLFLDFCAAFLTKLRV).

Belongs to the protein kinase superfamily. Ser/Thr protein kinase family. Interacts with HDR1. As to expression, strongly expressed in immature seeds. Mostly expressed in panicles, leaf sheaths and roots, and to a lower extent, in germinating seeds and leaf blades.

It localises to the nucleus. The enzyme catalyses L-seryl-[protein] + ATP = O-phospho-L-seryl-[protein] + ADP + H(+). It carries out the reaction L-threonyl-[protein] + ATP = O-phospho-L-threonyl-[protein] + ADP + H(+). Functionally, suppressor of flowering in long days (LD) via the that up-regulation of HD1 and the down-regulation of EHD1. Can phosphorylate HD1 in the presence of HDR1. The sequence is that of Serine/threonine protein kinase OSK4 from Oryza sativa subsp. indica (Rice).